We begin with the raw amino-acid sequence, 405 residues long: MKLLGHKIELWAGLLLPDVSISGMSELRFPEEKPLLRGQDTEMESADTFLSAADTDWKEHDIETPYGMLHVVIRGTPKGNRPAILTYHDVGLNHKLCFNTFFNYEDMQEITKHFVVCHVDAPGQQVGASQFPQGYQYPTMEQLAAMLPSVMQHFGFQSIIGIGVGAGAYVLAKFALIFPELVEGMVLVNIDPNGKGWIDWAASKLSGLTSSLPETVLSHLFSQEELMNNTELVQNYRQQISSCVNQSNLQLFWNMYNSRRDLEMSRPGTVPNAKTLRAPVMLVVGDNAPAEDCVVECNSKLDPTNTTFLKMADSGGLPQVTQPGKLTEAFKYFLQGMGYIASLKDRRQSASAGAVPSASMTRLARSRTASLTSASSVDGARPRPCTQSESSDGIGQINHTMEVSC.

Positions Ala352–Cys405 are disordered. Residues Thr361–Ser376 show a composition bias toward low complexity. Residues Cys385–Cys405 are compositionally biased toward polar residues.

Belongs to the NDRG family.

It localises to the cytoplasm. It is found in the cytosol. In terms of biological role, contributes to the maintenance of intracerebral BDNF levels within the normal range. May enhance growth factor-induced ERK1 and ERK2 phosphorylation. May attenuate growth factor-promoted ELK1 phosphorylation in a microtubule-dependent manner. The chain is Protein NDRG4 from Xenopus tropicalis (Western clawed frog).